We begin with the raw amino-acid sequence, 354 residues long: Nucleoporin seh1 (354 aa).

WD repeat units lie at residues 10 to 49, 55 to 96, 112 to 153, 161 to 209, 216 to 259, and 270 to 309; these read DHKD…KWNV, AHSG…KVSS, DSRT…NLSQ, SNKL…RKCV, DITD…TDIS, and EHNC…QWRC.

It belongs to the WD repeat SEC13 family. Probable component of the nuclear pore complex (NPC). Component of the GATOR complex consisting of mio, Nup44A/Seh1, Im11, Nplr3, Nplr2, Wdr24, Wdr59 and Sec13. Within the GATOR complex, probable component of the GATOR2 subcomplex which is likely composed of mio, Nup44A/Seh1, Wdr24, Wdr59 and Sec13. Interacts with mio. Interacts with Wdr24. The GATOR2 complex associates with unmet in the absence of S-adenosyl-L-methionine; the mio-Wdr24-Nup44A subcomplex is essential and sufficient for this interaction while Wdr59 and Sec13 are dispensable. This association acts as a nutrient sensor to inhibit mTORC1 signaling in the absence of methionine. In terms of tissue distribution, expressed in ovarian cysts.

The protein localises to the nucleus envelope. It is found in the lysosome. In terms of biological role, probable component of the nuclear pore complex (NPC). Involved in maintaining the localization of another nucleoporin Mgtor to the nuclear envelope of early meiotic female germline cells. It is not involved in recruiting the nucleoporins Mgtor, Nup107, Nup153 and FG-containing nucleoporins to the NPC. An essential component of the GATOR subcomplex GATOR2 which functions as an activator of the amino acid-sensing branch of the mTORC1 signaling pathway. The two GATOR subcomplexes, GATOR1 and GATOR2, regulate the mTORC1 pathway in order to mediate metabolic homeostasis, female gametogenesis and the response to amino acid limitation and complete starvation. GATOR2 activates the mTORC1 signaling pathway through the inhibition of the GATOR1 subcomplex, controlling the switch to cell proliferation growth under nutrient replete conditions and growth during female oocyte development. This component is required for activating mTORC1 specifically in germline cells to promote cell growth and maintain the oocyte fate, probably influences the organization and/or function of microtubules within ovarian cysts, and promotes accumulation of another GATOR2 complex member mio in germline and somatic tissues. GATOR1 and GATOR2 act at different stages of oogenesis to regulate mTORC1 in order to control meiotic entry and promote oocyte growth and development. After exactly four mitotic cyst divisions, the GATOR1 complex members (Iml1, Nprl2 and Nprl3) down-regulate mTORC1 to slow cellular metabolism and promote the mitotic/meiotic transition. At later stages of oogenesis, the mio and Nup44A components of the GATOR2 complex inhibit GATOR1 and thus activate mTORC1 to promote meiotic progression, and drive oocyte growth and development. In addition to its role in the regulation of the mTORC1 complex, functions independently of mTORC1 to prevent the inappropriate accumulation of autolysosomes in germline tissues. The sequence is that of Nucleoporin seh1 from Drosophila melanogaster (Fruit fly).